The sequence spans 274 residues: Putative pyruvate, phosphate dikinase regulatory protein 1 (274 aa).

Residue 149–156 (GISRTSKT) participates in ADP binding.

Belongs to the pyruvate, phosphate/water dikinase regulatory protein family. PDRP subfamily.

The enzyme catalyses N(tele)-phospho-L-histidyl/L-threonyl-[pyruvate, phosphate dikinase] + ADP = N(tele)-phospho-L-histidyl/O-phospho-L-threonyl-[pyruvate, phosphate dikinase] + AMP + H(+). It carries out the reaction N(tele)-phospho-L-histidyl/O-phospho-L-threonyl-[pyruvate, phosphate dikinase] + phosphate + H(+) = N(tele)-phospho-L-histidyl/L-threonyl-[pyruvate, phosphate dikinase] + diphosphate. In terms of biological role, bifunctional serine/threonine kinase and phosphorylase involved in the regulation of the pyruvate, phosphate dikinase (PPDK) by catalyzing its phosphorylation/dephosphorylation. The polypeptide is Putative pyruvate, phosphate dikinase regulatory protein 1 (Listeria welshimeri serovar 6b (strain ATCC 35897 / DSM 20650 / CCUG 15529 / CIP 8149 / NCTC 11857 / SLCC 5334 / V8)).